The chain runs to 284 residues: AA14 family lytic polysaccharide monooxygenase B (284 aa).

The signal sequence occupies residues 1–20; the sequence is MGYLSKLVTSVVFAIPLASA. N-linked (GlcNAc...) asparagine glycosylation is found at asparagine 42, asparagine 96, asparagine 142, and asparagine 183. Cysteines 197 and 218 form a disulfide.

The protein belongs to the polysaccharide monooxygenase AA14 family. Cu(2+) is required as a cofactor.

The protein resides in the secreted. Functionally, lytic polysaccharide monooxygenase (LPMO) that plays decomposes some specific network structures formed between cellulose and hemicellulose in the plant cell walls. Catalysis by LPMOs requires the reduction of the active-site copper from Cu(II) to Cu(I) by a reducing agent and H(2)O(2) or O(2) as a cosubstrate. In Talaromyces rugulosus (Penicillium rugulosum), this protein is AA14 family lytic polysaccharide monooxygenase B.